A 143-amino-acid chain; its full sequence is Large-conductance mechanosensitive channel (143 aa).

The next 2 helical transmembrane spans lie at 19–39 (VGVIIGAAFGGIVSSLVADVI) and 81–101 (GSFLTLTLNFLIVAFVLFLVV).

The protein belongs to the MscL family. As to quaternary structure, homopentamer.

It is found in the cell inner membrane. Channel that opens in response to stretch forces in the membrane lipid bilayer. May participate in the regulation of osmotic pressure changes within the cell. The polypeptide is Large-conductance mechanosensitive channel (Rhodopseudomonas palustris (strain HaA2)).